The sequence spans 218 residues: Large ribosomal subunit protein uL3 (218 aa).

Belongs to the universal ribosomal protein uL3 family. In terms of assembly, part of the 50S ribosomal subunit. Forms a cluster with proteins L14 and L19.

In terms of biological role, one of the primary rRNA binding proteins, it binds directly near the 3'-end of the 23S rRNA, where it nucleates assembly of the 50S subunit. The polypeptide is Large ribosomal subunit protein uL3 (Corynebacterium glutamicum (strain R)).